The chain runs to 429 residues: Proton extrusion protein PxcA (429 aa).

The disordered stretch occupies residues 139 to 161 (LNGPEAPQTNGDRPDNKPKVETV). The segment covering 150 to 161 (DRPDNKPKVETV) has biased composition (basic and acidic residues). A run of 4 helical transmembrane segments spans residues 211-231 (FLLT…IAIT), 306-326 (AYEN…ILLI), 353-373 (LIIL…WEII), and 389-409 (FNFL…KYWI).

The protein belongs to the CemA family.

The protein localises to the cell inner membrane. Required for H(+) efflux immediately after light irradiation to form a rapid H(+) concentration gradient across the thylakoid membranes. Together with PxcL, contributes to transient H(+) uptake following dark to light transition. In Picosynechococcus sp. (strain ATCC 27264 / PCC 7002 / PR-6) (Agmenellum quadruplicatum), this protein is Proton extrusion protein PxcA.